The sequence spans 107 residues: Universal stress protein B homolog (107 aa).

2 consecutive transmembrane segments (helical) span residues 6-26 (TILFALMVVTGVNMIRYLTAL) and 86-106 (VRELFVLSTALLGVTLLAAFI).

This sequence belongs to the universal stress protein B family.

It localises to the cell inner membrane. The polypeptide is Universal stress protein B homolog (Vibrio parahaemolyticus serotype O3:K6 (strain RIMD 2210633)).